Consider the following 209-residue polypeptide: Ribosomal RNA large subunit methyltransferase E (209 aa).

Positions 63, 65, 83, 99, and 124 each coordinate S-adenosyl-L-methionine. Catalysis depends on K164, which acts as the Proton acceptor.

It belongs to the class I-like SAM-binding methyltransferase superfamily. RNA methyltransferase RlmE family.

The protein resides in the cytoplasm. The enzyme catalyses uridine(2552) in 23S rRNA + S-adenosyl-L-methionine = 2'-O-methyluridine(2552) in 23S rRNA + S-adenosyl-L-homocysteine + H(+). Its function is as follows. Specifically methylates the uridine in position 2552 of 23S rRNA at the 2'-O position of the ribose in the fully assembled 50S ribosomal subunit. The protein is Ribosomal RNA large subunit methyltransferase E of Cronobacter sakazakii (strain ATCC BAA-894) (Enterobacter sakazakii).